The following is an 883-amino-acid chain: Translation initiation factor IF-2 (883 aa).

Disordered stretches follow at residues 1–96 (MVDT…RSGM) and 132–259 (QRRA…RGRL). Residues 57 to 66 (PAEPAAAAPE) are compositionally biased toward low complexity. Pro residues predominate over residues 72 to 87 (TPAPPAVSPRQQPRPS). Residues 132 to 188 (QRRAAQELVDKAEREAAEVRRKAEEERHRHEEETKRKAETEAKKRFGEAEPAKKPAD) are compositionally biased toward basic and acidic residues. Low complexity predominate over residues 191 to 217 (PASTSTTTTAPRAPVTTTTRPPAVAAE). The 172-residue stretch at 380-551 (PRSPVVTVMG…ALQAELLDLK (172 aa)) folds into the tr-type G domain. The segment at 389–396 (GHVDHGKT) is G1. 389 to 396 (GHVDHGKT) is a binding site for GTP. Residues 414-418 (GITQH) are G2. Residues 437-440 (DTPG) are G3. GTP is bound by residues 437 to 441 (DTPGH) and 491 to 494 (NKID). The segment at 491 to 494 (NKID) is G4. The tract at residues 527 to 529 (SAK) is G5.

This sequence belongs to the TRAFAC class translation factor GTPase superfamily. Classic translation factor GTPase family. IF-2 subfamily.

It localises to the cytoplasm. One of the essential components for the initiation of protein synthesis. Protects formylmethionyl-tRNA from spontaneous hydrolysis and promotes its binding to the 30S ribosomal subunits. Also involved in the hydrolysis of GTP during the formation of the 70S ribosomal complex. In Rhodopseudomonas palustris (strain BisB5), this protein is Translation initiation factor IF-2.